The sequence spans 195 residues: Probable serine/threonine-protein kinase BUD32 homolog (195 aa).

One can recognise a Protein kinase domain in the interval 1–195; that stretch reads MKVYLGGEAE…GRYVERVSMG (195 aa). Residue lysine 12 participates in ATP binding. Aspartate 107 acts as the Proton acceptor in catalysis.

It belongs to the protein kinase superfamily. Tyr protein kinase family. BUD32 subfamily.

The protein resides in the cytoplasm. The enzyme catalyses L-seryl-[protein] + ATP = O-phospho-L-seryl-[protein] + ADP + H(+). It catalyses the reaction L-threonyl-[protein] + ATP = O-phospho-L-threonyl-[protein] + ADP + H(+). Could be involved in the formation of a threonylcarbamoyl group on adenosine at position 37 (t(6)A37) in tRNAs that read codons beginning with adenine. This chain is Probable serine/threonine-protein kinase BUD32 homolog, found in Archaeoglobus fulgidus (strain ATCC 49558 / DSM 4304 / JCM 9628 / NBRC 100126 / VC-16).